We begin with the raw amino-acid sequence, 545 residues long: CTP synthase (545 aa).

The segment at 1 to 266 is amidoligase domain; sequence MTTRYIFVTG…DELVVKRFGI (266 aa). Serine 14 serves as a coordination point for CTP. Position 14 (serine 14) interacts with UTP. ATP is bound by residues 15-20 and aspartate 72; that span reads SLGKGI. Residues aspartate 72 and glutamate 140 each coordinate Mg(2+). Residues 147 to 149, 187 to 192, and lysine 223 contribute to the CTP site; these read DIE and KTKPTQ. Residues 187 to 192 and lysine 223 contribute to the UTP site; that span reads KTKPTQ. Residue 239-241 coordinates ATP; the sequence is KDV. In terms of domain architecture, Glutamine amidotransferase type-1 spans 291–542; the sequence is TIGMVGKYIE…VAAATAYQKR (252 aa). An L-glutamine-binding site is contributed by glycine 352. Residue cysteine 379 is the Nucleophile; for glutamine hydrolysis of the active site. Residues 380–383, glutamate 403, and arginine 470 contribute to the L-glutamine site; that span reads LGLQ. Active-site residues include histidine 515 and glutamate 517.

It belongs to the CTP synthase family. Homotetramer.

The catalysed reaction is UTP + L-glutamine + ATP + H2O = CTP + L-glutamate + ADP + phosphate + 2 H(+). It catalyses the reaction L-glutamine + H2O = L-glutamate + NH4(+). The enzyme catalyses UTP + NH4(+) + ATP = CTP + ADP + phosphate + 2 H(+). It functions in the pathway pyrimidine metabolism; CTP biosynthesis via de novo pathway; CTP from UDP: step 2/2. Allosterically activated by GTP, when glutamine is the substrate; GTP has no effect on the reaction when ammonia is the substrate. The allosteric effector GTP functions by stabilizing the protein conformation that binds the tetrahedral intermediate(s) formed during glutamine hydrolysis. Inhibited by the product CTP, via allosteric rather than competitive inhibition. Functionally, catalyzes the ATP-dependent amination of UTP to CTP with either L-glutamine or ammonia as the source of nitrogen. Regulates intracellular CTP levels through interactions with the four ribonucleotide triphosphates. This is CTP synthase from Shewanella sediminis (strain HAW-EB3).